We begin with the raw amino-acid sequence, 87 residues long: Phosphoribosyl-ATP pyrophosphatase (87 aa).

It belongs to the PRA-PH family.

It localises to the cytoplasm. The catalysed reaction is 1-(5-phospho-beta-D-ribosyl)-ATP + H2O = 1-(5-phospho-beta-D-ribosyl)-5'-AMP + diphosphate + H(+). Its pathway is amino-acid biosynthesis; L-histidine biosynthesis; L-histidine from 5-phospho-alpha-D-ribose 1-diphosphate: step 2/9. The sequence is that of Phosphoribosyl-ATP pyrophosphatase from Pseudarthrobacter chlorophenolicus (strain ATCC 700700 / DSM 12829 / CIP 107037 / JCM 12360 / KCTC 9906 / NCIMB 13794 / A6) (Arthrobacter chlorophenolicus).